Consider the following 84-residue polypeptide: Putative lipoprotein RzoQ (84 aa).

Positions 1–22 (MRNRNLLKFLPGLLICLIVLTS) are cleaved as a signal peptide. The N-palmitoyl cysteine moiety is linked to residue C23. The S-diacylglycerol cysteine moiety is linked to residue C23.

The protein localises to the cell membrane. The polypeptide is Putative lipoprotein RzoQ (rzoQ) (Escherichia coli (strain K12)).